The following is a 2499-amino-acid chain: Probable polyketide synthase 22 (2499 aa).

The region spanning 11–430 (DNQVAIVGLG…GSNACVLLSE (420 aa)) is the Ketosynthase family 3 (KS3) domain. Catalysis depends on for beta-ketoacyl synthase activity residues Cys177, His316, and His354. Positions 623–656 (GITPSIIVGHSLGEVASAFCSGMIDLETACFVIY) are acyl/malonyl transferases. Residue Ser633 is the For acyl/malonyl transferase activity of the active site. An N-terminal hotdog fold region spans residues 922 to 1044 (APINQLGNKN…SRILMKSLDV (123 aa)). The region spanning 922–1209 (APINQLGNKN…IASTLSTKSE (288 aa)) is the PKS/mFAS DH domain. His956 functions as the Proton acceptor; for dehydratase activity in the catalytic mechanism. The C-terminal hotdog fold stretch occupies residues 1059–1209 (NWSTLKREQL…IASTLSTKSE (151 aa)). The active-site Proton donor; for dehydratase activity is the Asp1121. The Carrier domain occupies 2414–2491 (EKEFSIRQDI…QIINIVTTKV (78 aa)). Residue Ser2451 is modified to O-(pantetheine 4'-phosphoryl)serine.

It depends on pantetheine 4'-phosphate as a cofactor.

Its function is as follows. Probable polyketide synthase. This is Probable polyketide synthase 22 (pks22) from Dictyostelium discoideum (Social amoeba).